A 104-amino-acid chain; its full sequence is Transcription initiation factor IIA subunit 2 (104 aa).

Belongs to the TFIIA subunit 2 family. As to quaternary structure, TFIIA is a heterodimer of the large unprocessed subunit 1 and a small subunit gamma.

The protein resides in the nucleus. Functionally, TFIIA is a component of the transcription machinery of RNA polymerase II and plays an important role in transcriptional activation. TFIIA in a complex with TBP mediates transcriptional activity. The polypeptide is Transcription initiation factor IIA subunit 2 (Schistosoma mansoni (Blood fluke)).